Reading from the N-terminus, the 473-residue chain is Aspartyl/glutamyl-tRNA(Asn/Gln) amidotransferase subunit B (473 aa).

Belongs to the GatB/GatE family. GatB subfamily. In terms of assembly, heterotrimer of A, B and C subunits.

It carries out the reaction L-glutamyl-tRNA(Gln) + L-glutamine + ATP + H2O = L-glutaminyl-tRNA(Gln) + L-glutamate + ADP + phosphate + H(+). The catalysed reaction is L-aspartyl-tRNA(Asn) + L-glutamine + ATP + H2O = L-asparaginyl-tRNA(Asn) + L-glutamate + ADP + phosphate + 2 H(+). Its function is as follows. Allows the formation of correctly charged Asn-tRNA(Asn) or Gln-tRNA(Gln) through the transamidation of misacylated Asp-tRNA(Asn) or Glu-tRNA(Gln) in organisms which lack either or both of asparaginyl-tRNA or glutaminyl-tRNA synthetases. The reaction takes place in the presence of glutamine and ATP through an activated phospho-Asp-tRNA(Asn) or phospho-Glu-tRNA(Gln). The chain is Aspartyl/glutamyl-tRNA(Asn/Gln) amidotransferase subunit B from Levilactobacillus brevis (strain ATCC 367 / BCRC 12310 / CIP 105137 / JCM 1170 / LMG 11437 / NCIMB 947 / NCTC 947) (Lactobacillus brevis).